The following is a 120-amino-acid chain: Large ribosomal subunit protein uL18 (120 aa).

It belongs to the universal ribosomal protein uL18 family. In terms of assembly, part of the 50S ribosomal subunit; part of the 5S rRNA/L5/L18/L25 subcomplex. Contacts the 5S and 23S rRNAs.

In terms of biological role, this is one of the proteins that bind and probably mediate the attachment of the 5S RNA into the large ribosomal subunit, where it forms part of the central protuberance. The sequence is that of Large ribosomal subunit protein uL18 from Bartonella quintana (strain Toulouse) (Rochalimaea quintana).